We begin with the raw amino-acid sequence, 403 residues long: 3-oxoacyl-[acyl-carrier-protein] synthase 2 (403 aa).

The region spanning 1-403 (VITGMGALSP…GGHNAVLVFK (403 aa)) is the Ketosynthase family 3 (KS3) domain. Active-site for beta-ketoacyl synthase activity residues include cysteine 158, histidine 297, and histidine 334.

It belongs to the thiolase-like superfamily. Beta-ketoacyl-ACP synthases family.

It carries out the reaction a fatty acyl-[ACP] + malonyl-[ACP] + H(+) = a 3-oxoacyl-[ACP] + holo-[ACP] + CO2. The catalysed reaction is (9Z)-hexadecenoyl-[ACP] + malonyl-[ACP] + H(+) = 3-oxo-(11Z)-octadecenoyl-[ACP] + holo-[ACP] + CO2. It functions in the pathway lipid metabolism; fatty acid biosynthesis. In terms of biological role, involved in the type II fatty acid elongation cycle. Catalyzes the elongation of a wide range of acyl-ACP by the addition of two carbons from malonyl-ACP to an acyl acceptor. Can efficiently catalyze the conversion of palmitoleoyl-ACP (cis-hexadec-9-enoyl-ACP) to cis-vaccenoyl-ACP (cis-octadec-11-enoyl-ACP), an essential step in the thermal regulation of fatty acid composition. The chain is 3-oxoacyl-[acyl-carrier-protein] synthase 2 (fabF) from Staphylococcus aureus.